Consider the following 665-residue polypeptide: Secreted LysM effector Lys3 (665 aa).

Residues 1–19 form the signal peptide; sequence MLWLTVSLTGFALLGVVAA. Asn43 and Asn153 each carry an N-linked (GlcNAc...) asparagine glycan. 3 LysM domains span residues 166 to 211, 216 to 264, and 303 to 349; these read RTYT…TLCL, TLRK…YICI, and KWYV…AYCV. Residue Asn234 is glycosylated (N-linked (GlcNAc...) asparagine). An N-linked (GlcNAc...) asparagine glycan is attached at Asn398. One can recognise a LysM 4 domain in the interval 409–454; the sequence is SWSDAAKLNSCSFIAHINGVTVSQLLQWNPSLSKDSCSLSRELYYC. N-linked (GlcNAc...) asparagine glycosylation is present at Asn531. The segment at 585-610 is disordered; that stretch reads SSVSMTNSAPATATSTGGPPAPTQDG. Low complexity predominate over residues 592–602; that stretch reads SAPATATSTGG. An N-linked (GlcNAc...) asparagine glycan is attached at Asn614. Residues 617 to 663 form the LysM 5 domain; the sequence is KWHVVESGDGCWAIYTKYGITSDQLFEWNTKISKDCSNIWLGYAVCV.

The protein belongs to the secreted LysM effector family.

In terms of biological role, might have a role in sequestration of chitin oligosaccharides (breakdown products of fungal cell walls that are released during invasion and act as triggers of host immunity) to dampen host defense. The protein is Secreted LysM effector Lys3 of Pochonia chlamydosporia (strain 123) (Metacordyceps chlamydosporia).